A 291-amino-acid polypeptide reads, in one-letter code: Protein US2 (291 aa).

The residue at position 2 (Gly2) is an N-acetylglycine; by host; partial. A disordered region spans residues 251–270; the sequence is PEVPDEQPTSPGRGPQETDP.

Belongs to the herpesviridae HHV-1 US2 protein family. Interacts with host KRT18.

The protein localises to the host cytoplasm. The protein resides in the host nucleus. The polypeptide is Protein US2 (Homo sapiens (Human)).